The chain runs to 368 residues: Polymerase delta-interacting protein 2 (368 aa).

Residues 1–51 constitute a mitochondrion transit peptide; sequence MAACTARRALAVGSRWWSRSLTGARWPRPLCAAAGAGAFSPASTTTTRRHL. Positions 235 to 360 constitute an ApaG domain; that stretch reads RETTENIRVT…FSLESNKDEK (126 aa). Thr292 bears the Phosphothreonine mark.

As to quaternary structure, interacts with PCNA and POLD2. Interacts with SSBP1. Interacts with PRIMPOL; leading to enhance DNA polymerase activity of PRIMPOL. Interacts with POLH. Interacts with POLD1; leading to stimulate DNA polymerase activity of POLD1.

Its subcellular location is the mitochondrion matrix. The protein localises to the nucleus. Involved in DNA damage tolerance by regulating translesion synthesis (TLS) of templates carrying DNA damage lesions such as 8oxoG and abasic sites. May act by stimulating activity of DNA polymerases involved in TLS, such as PRIMPOL and polymerase delta (POLD1). The protein is Polymerase delta-interacting protein 2 of Homo sapiens (Human).